The sequence spans 355 residues: Ubiquinone biosynthesis protein COQ4 homolog, mitochondrial (355 aa).

His134, Asp135, His138, and Glu150 together coordinate Zn(2+).

This sequence belongs to the COQ4 family. Component of a multi-subunit COQ enzyme complex. The cofactor is Zn(2+).

Its subcellular location is the mitochondrion inner membrane. It carries out the reaction a 4-hydroxy-3-methoxy-5-(all-trans-polyprenyl)benzoate + H(+) = a 2-methoxy-6-(all-trans-polyprenyl)phenol + CO2. It participates in cofactor biosynthesis; ubiquinone biosynthesis. Its function is as follows. Lyase that catalyzes the C1-decarboxylation of 4-hydroxy-3-methoxy-5-(all-trans-polyprenyl)benzoic acid into 2-methoxy-6-(all-trans-polyprenyl)phenol during ubiquinone biosynthesis. This chain is Ubiquinone biosynthesis protein COQ4 homolog, mitochondrial, found in Plasmodium chabaudi chabaudi.